Reading from the N-terminus, the 189-residue chain is Accessory gene regulator protein B (189 aa).

5 helical membrane passes run 50-70, 83-103, 105-125, 143-163, and 164-184; these read VSLL…FFFI, LLCY…VGYV, VSSL…SIYA, KIKA…LNEP, and YQQL…PIFF.

The protein belongs to the AgrB family.

The protein resides in the cell membrane. Essential for the production of a quorum sensing system signal molecule, the autoinducing peptide (AIP). This quorum sensing system is responsible for the regulation of the expression of virulence factor genes. Involved in the proteolytic processing of AgrD, the precursor of AIP. The protein is Accessory gene regulator protein B of Staphylococcus saprophyticus subsp. saprophyticus (strain ATCC 15305 / DSM 20229 / NCIMB 8711 / NCTC 7292 / S-41).